A 2067-amino-acid polypeptide reads, in one-letter code: Lipoxygenase homology domain-containing protein 1 (2067 aa).

PLAT domains follow at residues 43-160, 172-287, 296-412, 425-540, 553-673, 684-803, 814-934, 969-1087, 1100-1225, 1254-1372, 1421-1539, 1552-1667, 1679-1797, 1810-1931, and 1948-2064; these read RVYE…RDLL, NKYE…RDIL, ITYI…RQLY, FPWS…REMT, ARYH…RELL, FRYH…VELY, VHYE…RELL, TTFS…RDLF, VPYE…RELV, VLYS…RLFY, IPYY…RVFD, VLYE…CEMC, TSYT…RDFA, TTYE…VFEV, and VKYE…RDLF.

It is found in the cell projection. The protein resides in the stereocilium. Functionally, involved in hearing. Required for normal function of hair cells in the inner ear. This chain is Lipoxygenase homology domain-containing protein 1 (LOXHD1), found in Homo sapiens (Human).